The chain runs to 453 residues: GTPase Der (453 aa).

EngA-type G domains are found at residues 3–167 (FTLA…PAQT) and 187–360 (IKVA…AVWN). Residues 9–16 (GRPNVGKS), 56–60 (DTAGL), 119–122 (NKSE), 193–200 (GRPNAGKS), 240–244 (DTAGL), and 305–308 (NKSD) contribute to the GTP site. A KH-like domain is found at 361 to 445 (TRIPTNPLNR…PIRLTLREKG (85 aa)).

This sequence belongs to the TRAFAC class TrmE-Era-EngA-EngB-Septin-like GTPase superfamily. EngA (Der) GTPase family. As to quaternary structure, associates with the 50S ribosomal subunit.

Functionally, GTPase that plays an essential role in the late steps of ribosome biogenesis. The protein is GTPase Der of Azorhizobium caulinodans (strain ATCC 43989 / DSM 5975 / JCM 20966 / LMG 6465 / NBRC 14845 / NCIMB 13405 / ORS 571).